Reading from the N-terminus, the 157-residue chain is Crossover junction endodeoxyribonuclease RuvC (157 aa).

Catalysis depends on residues Asp-7, Glu-66, and Asp-139. The Mg(2+) site is built by Asp-7, Glu-66, and Asp-139.

The protein belongs to the RuvC family. In terms of assembly, homodimer which binds Holliday junction (HJ) DNA. The HJ becomes 2-fold symmetrical on binding to RuvC with unstacked arms; it has a different conformation from HJ DNA in complex with RuvA. In the full resolvosome a probable DNA-RuvA(4)-RuvB(12)-RuvC(2) complex forms which resolves the HJ. It depends on Mg(2+) as a cofactor.

The protein localises to the cytoplasm. It carries out the reaction Endonucleolytic cleavage at a junction such as a reciprocal single-stranded crossover between two homologous DNA duplexes (Holliday junction).. In terms of biological role, the RuvA-RuvB-RuvC complex processes Holliday junction (HJ) DNA during genetic recombination and DNA repair. Endonuclease that resolves HJ intermediates. Cleaves cruciform DNA by making single-stranded nicks across the HJ at symmetrical positions within the homologous arms, yielding a 5'-phosphate and a 3'-hydroxyl group; requires a central core of homology in the junction. The consensus cleavage sequence is 5'-(A/T)TT(C/G)-3'. Cleavage occurs on the 3'-side of the TT dinucleotide at the point of strand exchange. HJ branch migration catalyzed by RuvA-RuvB allows RuvC to scan DNA until it finds its consensus sequence, where it cleaves and resolves the cruciform DNA. This is Crossover junction endodeoxyribonuclease RuvC from Helicobacter pylori (strain J99 / ATCC 700824) (Campylobacter pylori J99).